A 459-amino-acid polypeptide reads, in one-letter code: Bifunctional protein GlmU (459 aa).

Residues 1–229 (MSNFAIXLAA…FDESLGVNDR (229 aa)) are pyrophosphorylase. UDP-N-acetyl-alpha-D-glucosamine-binding positions include 8 to 11 (LAAG), Lys22, Gln72, and 77 to 78 (GT). Asp102 provides a ligand contact to Mg(2+). 4 residues coordinate UDP-N-acetyl-alpha-D-glucosamine: Gly139, Glu154, Asn169, and Asn227. Asn227 serves as a coordination point for Mg(2+). The interval 230–250 (VALATAESVMRRRINHKHMVN) is linker. The N-acetyltransferase stretch occupies residues 251–459 (GVSFVNPEAT…TRLPHHPKNQ (209 aa)). Arg332 and Lys350 together coordinate UDP-N-acetyl-alpha-D-glucosamine. Catalysis depends on His362, which acts as the Proton acceptor. Positions 365 and 376 each coordinate UDP-N-acetyl-alpha-D-glucosamine. Acetyl-CoA contacts are provided by residues Ala379, 385–386 (NY), Ser404, Ala422, and Arg439.

In the N-terminal section; belongs to the N-acetylglucosamine-1-phosphate uridyltransferase family. The protein in the C-terminal section; belongs to the transferase hexapeptide repeat family. Homotrimer. It depends on Mg(2+) as a cofactor.

The protein localises to the cytoplasm. It catalyses the reaction alpha-D-glucosamine 1-phosphate + acetyl-CoA = N-acetyl-alpha-D-glucosamine 1-phosphate + CoA + H(+). It carries out the reaction N-acetyl-alpha-D-glucosamine 1-phosphate + UTP + H(+) = UDP-N-acetyl-alpha-D-glucosamine + diphosphate. It participates in nucleotide-sugar biosynthesis; UDP-N-acetyl-alpha-D-glucosamine biosynthesis; N-acetyl-alpha-D-glucosamine 1-phosphate from alpha-D-glucosamine 6-phosphate (route II): step 2/2. Its pathway is nucleotide-sugar biosynthesis; UDP-N-acetyl-alpha-D-glucosamine biosynthesis; UDP-N-acetyl-alpha-D-glucosamine from N-acetyl-alpha-D-glucosamine 1-phosphate: step 1/1. It functions in the pathway bacterial outer membrane biogenesis; LPS lipid A biosynthesis. Its function is as follows. Catalyzes the last two sequential reactions in the de novo biosynthetic pathway for UDP-N-acetylglucosamine (UDP-GlcNAc). The C-terminal domain catalyzes the transfer of acetyl group from acetyl coenzyme A to glucosamine-1-phosphate (GlcN-1-P) to produce N-acetylglucosamine-1-phosphate (GlcNAc-1-P), which is converted into UDP-GlcNAc by the transfer of uridine 5-monophosphate (from uridine 5-triphosphate), a reaction catalyzed by the N-terminal domain. The sequence is that of Bifunctional protein GlmU from Streptococcus pneumoniae serotype 19F (strain G54).